The chain runs to 127 residues: Small ribosomal subunit protein uS11 (127 aa).

The protein belongs to the universal ribosomal protein uS11 family. As to quaternary structure, part of the 30S ribosomal subunit. Interacts with proteins S7 and S18. Binds to IF-3.

Functionally, located on the platform of the 30S subunit, it bridges several disparate RNA helices of the 16S rRNA. Forms part of the Shine-Dalgarno cleft in the 70S ribosome. This Ruthia magnifica subsp. Calyptogena magnifica protein is Small ribosomal subunit protein uS11.